The following is a 104-amino-acid chain: Transcription factor S (104 aa).

Zn(2+) contacts are provided by cysteine 4, cysteine 7, cysteine 20, cysteine 22, cysteine 65, cysteine 68, cysteine 93, and cysteine 96. The C4-type zinc-finger motif lies at cysteine 4–cysteine 22. A TFIIS-type zinc finger spans residues threonine 61–arginine 101.

Belongs to the archaeal RpoM/eukaryotic RPA12/RPB9/RPC11 RNA polymerase family.

Functionally, induces RNA cleavage activity in the RNA polymerase. In its presence, the cleavage activity of the RNA polymerase truncates the RNA back to position +15 in a stepwise manner by releasing mainly dinucleotides from the 3'-end of the nascent RNA. The truncated RNAs are able to continue elongation. Involved in transcriptional proofreading and fidelity. Misincorporation of nucleotides during elongation of transcription leads to arrested elongation complexes which are rescued by TFS-promoted removal of a dinucleotide from the 3'-end. TFS is able to induce a cleavage resynthesis cycle in stalled elongation complexes (resulting from the next missing nucleotide or a reduced incorporation rate of a wrong nucleotide) preventing misincorporation and enabling proofreading in a post-incorporation manner. Pausing of elongation complexes is the main determinant of TFS-induced RNA cleavage. The polypeptide is Transcription factor S (Methanothermobacter thermautotrophicus (strain ATCC 29096 / DSM 1053 / JCM 10044 / NBRC 100330 / Delta H) (Methanobacterium thermoautotrophicum)).